Here is a 1048-residue protein sequence, read N- to C-terminus: Self-sufficient cytochrome P450 monooxygenase CYP505E4 (1048 aa).

Cys-405 is a binding site for heme. Positions 499–640 (VSFFYGSNSG…DLEVWEETNL (142 aa)) constitute a Flavodoxin-like domain. FMN contacts are provided by residues 505-509 (SNSGT) and 584-616 (VFGC…TRLA). The FAD-binding FR-type domain occupies 678 to 906 (RDLIEAKVTA…RPAKDAFHLP (229 aa)).

The protein in the N-terminal section; belongs to the cytochrome P450 family. FAD is required as a cofactor. The cofactor is FMN. It depends on heme as a cofactor.

It catalyses the reaction 2 oxidized [cytochrome P450] + NADPH = 2 reduced [cytochrome P450] + NADP(+) + H(+). The catalysed reaction is an organic molecule + reduced [NADPH--hemoprotein reductase] + O2 = an alcohol + oxidized [NADPH--hemoprotein reductase] + H2O + H(+). It carries out the reaction dodecanoate + reduced [NADPH--hemoprotein reductase] + O2 = 5-hydroxydodecanoate + oxidized [NADPH--hemoprotein reductase] + H2O + H(+). The enzyme catalyses tetradecanoate + reduced [NADPH--hemoprotein reductase] + O2 = 7-hydroxytetradecanoate + oxidized [NADPH--hemoprotein reductase] + H2O + H(+). It catalyses the reaction dodecan-1-ol + reduced [NADPH--hemoprotein reductase] + O2 = 1,5-dodecanediol + oxidized [NADPH--hemoprotein reductase] + H2O + H(+). The catalysed reaction is dodecan-1-ol + reduced [NADPH--hemoprotein reductase] + O2 = 1,4-dodecanediol + oxidized [NADPH--hemoprotein reductase] + H2O + H(+). It carries out the reaction dodecan-1-ol + reduced [NADPH--hemoprotein reductase] + O2 = 1,6-dodecanediol + oxidized [NADPH--hemoprotein reductase] + H2O + H(+). Functionally, self-sufficient cytochrome P450 monooxygenase that catalyzes the regioselective in-chain hydroxylation of alkanes, fatty alcohols, and fatty acids at the omega-7 position. Performs hydroxylation of C10-C16 n-alkanes and C12 and C14 fatty alcohols; and thereby enables the one step biocatalytic synthesis of rare alcohols such as 5-dodecanol and 7-tetradecanol. Converts 1-dodecanol into 1,5-dodecanediol as major product with very little sub-terminally hydroxylated products with the 1,4-dodecanediol and 1,6-dodecanediol more abundant. Converts dodecanoic acid to 5-hydroxydodecanoic acid which can be further converted into delta-dodecalactone by lactonization of the 5-hydroxy acid at low pH. Also gives sub-terminal hydroxylation of dodecanoic acid with 9-hydroxydodecanoic acid being the second most abundant product. The polypeptide is Self-sufficient cytochrome P450 monooxygenase CYP505E4 (Penicillium expansum (Blue mold rot fungus)).